The sequence spans 103 residues: Large ribosomal subunit protein bL21 (103 aa).

It belongs to the bacterial ribosomal protein bL21 family. As to quaternary structure, part of the 50S ribosomal subunit. Contacts protein L20.

This protein binds to 23S rRNA in the presence of protein L20. In Yersinia pseudotuberculosis serotype O:1b (strain IP 31758), this protein is Large ribosomal subunit protein bL21.